Reading from the N-terminus, the 193-residue chain is Chromophore lyase CpcS/CpeS 4 (193 aa).

It belongs to the CpcS/CpeS biliprotein lyase family.

In terms of biological role, covalently attaches a chromophore to Cys residue(s) of phycobiliproteins. The chain is Chromophore lyase CpcS/CpeS 4 from Trichodesmium erythraeum (strain IMS101).